Here is a 727-residue protein sequence, read N- to C-terminus: Polyribonucleotide nucleotidyltransferase (727 aa).

Mg(2+) is bound by residues aspartate 491 and aspartate 497. The 60-residue stretch at 558–617 (PRIITASIHPDKIREVIGPGGKTIKKIIDETGVKIDIEDDGRVFISAVDGEAGENALKII) folds into the KH domain. The S1 motif domain maps to 627–701 (GRIYNGRVTR…KQGRLNLSRK (75 aa)). The interval 698–727 (LSRKEALPNPNPSSNPNPNGITANRNPRNS) is disordered. The span at 717 to 727 (GITANRNPRNS) shows a compositional bias: polar residues.

It belongs to the polyribonucleotide nucleotidyltransferase family. Requires Mg(2+) as cofactor.

Its subcellular location is the cytoplasm. The enzyme catalyses RNA(n+1) + phosphate = RNA(n) + a ribonucleoside 5'-diphosphate. Involved in mRNA degradation. Catalyzes the phosphorolysis of single-stranded polyribonucleotides processively in the 3'- to 5'-direction. The chain is Polyribonucleotide nucleotidyltransferase from Desulfitobacterium hafniense (strain Y51).